The chain runs to 210 residues: GEM-like protein 7 (210 aa).

The 79-residue stretch at 88–166 (KIYKRLFKVC…CKINGVNQSQ (79 aa)) folds into the GRAM domain.

It belongs to the GEM family.

This chain is GEM-like protein 7, found in Arabidopsis thaliana (Mouse-ear cress).